Here is a 99-residue protein sequence, read N- to C-terminus: Integration host factor subunit alpha (99 aa).

This sequence belongs to the bacterial histone-like protein family. As to quaternary structure, heterodimer of an alpha and a beta chain.

Its function is as follows. This protein is one of the two subunits of integration host factor, a specific DNA-binding protein that functions in genetic recombination as well as in transcriptional and translational control. This is Integration host factor subunit alpha from Thioalkalivibrio sulfidiphilus (strain HL-EbGR7).